The following is a 404-amino-acid chain: Phosphoglycerate kinase (404 aa).

Residues 22–24 (DLN), Arg37, 60–63 (HLGR), Arg119, and Arg156 contribute to the substrate site. Residues Lys206, Gly302, Glu333, and 359 to 362 (GGDS) contribute to the ATP site.

This sequence belongs to the phosphoglycerate kinase family. In terms of assembly, monomer.

Its subcellular location is the cytoplasm. The catalysed reaction is (2R)-3-phosphoglycerate + ATP = (2R)-3-phospho-glyceroyl phosphate + ADP. Its pathway is carbohydrate degradation; glycolysis; pyruvate from D-glyceraldehyde 3-phosphate: step 2/5. The protein is Phosphoglycerate kinase of Clavibacter sepedonicus (Clavibacter michiganensis subsp. sepedonicus).